Consider the following 506-residue polypeptide: Cytochrome P450 monooxygenase BOA3 (506 aa).

Residues 15–35 (IYLWIGFVLVVLLAYPTYFAI) traverse the membrane as a helical segment. Cys-451 provides a ligand contact to heme.

It belongs to the cytochrome P450 family. It depends on heme as a cofactor.

Its subcellular location is the membrane. Its pathway is polyketide biosynthesis. In terms of biological role, cytochrome P450 monooxygenase; part of the gene cluster A that mediates the biosynthesis of botcinic acid and its botcinin derivatives, acetate-derived polyketides that contribute to virulence when combined with the sesquiterpene botrydial. Botcinic acid and its derivatives have been shown to induce chlorosis and necrosis during host plant infection, but also have antifungal activities. Two polyketide synthases, BOA6 and BOA9, are involved in the biosynthesis of botcinins. BOA6 mediates the formation of the per-methylated tetraketide core by condensation of four units of malonyl-CoA with one unit of acetyl-CoA, which would be methylated in activated methylene groups to yield a bicyclic acid intermediate that could then either be converted to botrylactone derivatives or lose the starter acetate unit through a retro-Claisen type C-C bond cleavage to yield botcinin derivatives. The second polyketide synthase, BOA9, is probably required for the biosynthesis of the tetraketide side chain of botcinins. The methyltransferase (MT) domain within BOA6 is probably responsible for the incorporation of four methyl groups. The trans-enoyl reductase BOA5 might take over the enoyl reductase function of BOA6 that misses an ER domain. The monooxygenases BOA2, BOA3 and BOA4 might be involved in further hydroxylations at C4, C5 and C8, whereas BOA7, close to BOA9, could potentially be involved in the hydroxylation at C4 in the side chain of botcinins. The polypeptide is Cytochrome P450 monooxygenase BOA3 (Botryotinia fuckeliana (strain B05.10) (Noble rot fungus)).